The chain runs to 64 residues: MKASELRDKDVAGLNQELSELLKAQFGLRMQKATQQLQNTSQLKKVRRDIARVRTVLGQKGNQK.

The protein belongs to the universal ribosomal protein uL29 family.

The chain is Large ribosomal subunit protein uL29 from Ralstonia pickettii (strain 12J).